The sequence spans 371 residues: Protein NDRG2 (371 aa).

The interval 1 to 21 (MAELQEVQITEEKPLLPGQTP) is disordered. An N-acetylalanine modification is found at Ala2. A Phosphothreonine modification is found at Thr20. 2 positions are modified to phosphoserine: Ser326 and Ser328. The residue at position 330 (Thr330) is a Phosphothreonine. A Phosphoserine modification is found at Ser332. A Phosphothreonine modification is found at Thr334. The segment at 334–371 (TSAASVDGNRSRSRTLSQSSESGTLSSGPPGHTMEVSC) is disordered. Residues Ser335, Ser338, and Ser344 each carry the phosphoserine modification. Residues 347–361 (RTLSQSSESGTLSSG) are compositionally biased toward low complexity. Position 348 is a phosphothreonine (Thr348). Ser350, Ser352, Ser353, and Ser355 each carry phosphoserine. Residue Thr357 is modified to Phosphothreonine. At Ser370 the chain carries Phosphoserine.

It belongs to the NDRG family. Interacts with CTNNB1. Highly expressed in brain, heart, skeletal muscle and salivary gland, and moderately in kidney and liver. Expressed in dendritic cells, but not in other blood cells. Expression levels are low in pancreatic and liver cancer tissues; absent in meningioma. Expressed in low-grade gliomas but present at low levels in glioblastoma. Isoform 1 and isoform 2 are present in brain neurons and up-regulated in Alzheimer disease (at protein level).

The protein resides in the cytoplasm. It is found in the perinuclear region. The protein localises to the cell projection. Its subcellular location is the growth cone. In terms of biological role, contributes to the regulation of the Wnt signaling pathway. Down-regulates CTNNB1-mediated transcriptional activation of target genes, such as CCND1, and may thereby act as tumor suppressor. May be involved in dendritic cell and neuron differentiation. This Homo sapiens (Human) protein is Protein NDRG2 (NDRG2).